A 437-amino-acid chain; its full sequence is MTKQGNDTQKRFFNDNLQTVDVAIFDAIRGEFERQQHEIELIASENIVSRAVLEAQGSVLTNKYAEGYPGKRYYGGCQFVDVIENLAIERAKKLFGADFANVQANSGSQMNQAVFLALLKPGDTFMGLDLNSGGHLTHGSSVNMSGKWFKSISYGVRKEDQLLDMEAVERLAKEHKPKLIIAGGSAYSRLWDWKKFREIADEIGAYLLVDMSHIAGLVAGGVHPSPVPHAHIVTTTTHKSLRGPRGGLILTNDEILAKKINSAIFPGLQGGPLMHVIAAKAVAFEEALQPVFKDYSANVVANAKTLAKTLQSNGFDIVSGGTDNHLLLVDLRSKKVTGKCAELALGRAHITCNKNSIPFDLETPFITSGIRLGSPAATTRGFAENEFIEIAHMISEILDNLGMAKSDEDNSAVEMVVRKKVEDMTNKFPLYSYLHTC.

(6S)-5,6,7,8-tetrahydrofolate contacts are provided by residues Leu130 and 134-136; that span reads GHL. Position 239 is an N6-(pyridoxal phosphate)lysine (Lys239). A (6S)-5,6,7,8-tetrahydrofolate-binding site is contributed by 363-365; it reads TPF.

Belongs to the SHMT family. In terms of assembly, homodimer. Pyridoxal 5'-phosphate is required as a cofactor.

The protein resides in the cytoplasm. It catalyses the reaction (6R)-5,10-methylene-5,6,7,8-tetrahydrofolate + glycine + H2O = (6S)-5,6,7,8-tetrahydrofolate + L-serine. The protein operates within one-carbon metabolism; tetrahydrofolate interconversion. It functions in the pathway amino-acid biosynthesis; glycine biosynthesis; glycine from L-serine: step 1/1. Its function is as follows. Catalyzes the reversible interconversion of serine and glycine with tetrahydrofolate (THF) serving as the one-carbon carrier. This reaction serves as the major source of one-carbon groups required for the biosynthesis of purines, thymidylate, methionine, and other important biomolecules. Also exhibits THF-independent aldolase activity toward beta-hydroxyamino acids, producing glycine and aldehydes, via a retro-aldol mechanism. The chain is Serine hydroxymethyltransferase from Bartonella henselae (strain ATCC 49882 / DSM 28221 / CCUG 30454 / Houston 1) (Rochalimaea henselae).